A 128-amino-acid chain; its full sequence is Disintegrin EO4A (128 aa).

Positions 1-20 (MIPVLLVTICLAVFPFQGSS) are cleaved as a signal peptide. The propeptide occupies 21–47 (IILESGNINDYEIVYPKKVNVLPTGAM). The Disintegrin domain maps to 26-112 (GNINDYEIVY…DCPRNPYKGK (87 aa)). 4 disulfide bridges follow: Cys53–Cys76, Cys67–Cys73, Cys72–Cys97, and Cys85–Cys104. Positions 89 to 91 (RGD) match the Cell attachment site motif. Positions 115–128 (PMKWPAAAKGSVLM) are excised as a propeptide.

This sequence belongs to the disintegrin family. Dimeric disintegrin subfamily. Heterodimer with EO5B; disulfide-linked. Expressed by the venom gland.

Its subcellular location is the secreted. In terms of biological role, poor inhibitor of platelet aggregation. The disintegrin inhibits the adhesion of cells expressing the RGD-dependent integrin alpha-5/beta-1 (ITGA5/ITGB1) to immobilized fibronectin. Inhibition on alpha-2b/beta-3 (ITGA2B/ITGB3) is low. This is Disintegrin EO4A from Echis ocellatus (Ocellated saw-scaled viper).